We begin with the raw amino-acid sequence, 351 residues long: Foldase protein PrsA 1 (351 aa).

A signal peptide spans 1–22; the sequence is MKNSNKLIASVVTLASVMALAA. A lipid anchor (N-palmitoyl cysteine) is attached at cysteine 23. Cysteine 23 is lipidated: S-diacylglycerol cysteine. The PpiC domain maps to 145–240; sequence TPTMAVEMIT…KKFYIVKVTK (96 aa). Low complexity-rich tracts occupy residues 303 to 317 and 326 to 351; these read KTKAASESSTTSESS and ESEQTQTSSAEEPTETEAQTQEPAAQ. Residues 303–351 form a disordered region; it reads KTKAASESSTTSESSKAAEENPSESEQTQTSSAEEPTETEAQTQEPAAQ.

This sequence belongs to the PrsA family.

The protein localises to the cell membrane. The catalysed reaction is [protein]-peptidylproline (omega=180) = [protein]-peptidylproline (omega=0). Functionally, plays a major role in protein secretion by helping the post-translocational extracellular folding of several secreted proteins. The chain is Foldase protein PrsA 1 (prsA1) from Streptococcus pyogenes serotype M18 (strain MGAS8232).